The sequence spans 673 residues: Putative K(+)-stimulated pyrophosphate-energized sodium pump (673 aa).

Transmembrane regions (helical) follow at residues 3-23, 62-82, 84-104, 127-147, and 154-174; these read SFIV…FMLS, IVIV…ACFI, GAIF…KANV, VMGM…YYIF, and VTGF…GGGI. Lys177 contributes to the substrate binding site. Mg(2+) is bound by residues Asp180, Asp184, Asn207, and Asp210. The next 6 membrane-spanning stretches (helical) occupy residues 222–242, 247–267, 279–299, 302–322, 364–384, and 387–407; these read LFES…VVYA, VMFP…GILF, ALNT…AILS, IFGN…GMII, LWPI…MGGG, and AMVG…TTGL. Residue Asp419 coordinates Mg(2+). Transmembrane regions (helical) follow at residues 449–469, 486–506, 553–573, and 576–596; these read AAIG…SLFA, VTLV…ALTM, EMIL…LLLG, and ALGG…ILMS. 3 residues coordinate Ca(2+): Asp603, Asp629, and Asp633. Lys636 contributes to the substrate binding site. A helical membrane pass occupies residues 652–672; it reads IVSLVFAPVVLQYGGILLNLI.

The protein belongs to the H(+)-translocating pyrophosphatase (TC 3.A.10) family. K(+)-stimulated subfamily. Homodimer. It depends on Mg(2+) as a cofactor.

The protein resides in the cell membrane. The catalysed reaction is Na(+)(in) + diphosphate + H2O = Na(+)(out) + 2 phosphate + H(+). With respect to regulation, requires K(+) for maximal activity. In terms of biological role, sodium pump that utilizes the energy of pyrophosphate hydrolysis as the driving force for Na(+) movement across the membrane. This chain is Putative K(+)-stimulated pyrophosphate-energized sodium pump, found in Clostridium tetani (strain Massachusetts / E88).